The chain runs to 196 residues: Phosphoheptose isomerase (196 aa).

An SIS domain is found at 31–196 (VARQFKAGNK…KAGLEAQIAV (166 aa)). A substrate-binding site is contributed by 46 to 48 (NGG). The Zn(2+) site is built by histidine 55 and glutamate 59. Substrate is bound by residues glutamate 59, 88-89 (ND), 114-116 (STS), serine 119, and glutamine 166. Residues glutamine 166 and histidine 174 each contribute to the Zn(2+) site.

The protein belongs to the SIS family. GmhA subfamily. Zn(2+) is required as a cofactor.

The protein localises to the cytoplasm. The catalysed reaction is 2 D-sedoheptulose 7-phosphate = D-glycero-alpha-D-manno-heptose 7-phosphate + D-glycero-beta-D-manno-heptose 7-phosphate. It functions in the pathway carbohydrate biosynthesis; D-glycero-D-manno-heptose 7-phosphate biosynthesis; D-glycero-alpha-D-manno-heptose 7-phosphate and D-glycero-beta-D-manno-heptose 7-phosphate from sedoheptulose 7-phosphate: step 1/1. Catalyzes the isomerization of sedoheptulose 7-phosphate in D-glycero-D-manno-heptose 7-phosphate. This Crocosphaera subtropica (strain ATCC 51142 / BH68) (Cyanothece sp. (strain ATCC 51142)) protein is Phosphoheptose isomerase.